The following is a 612-amino-acid chain: UvrABC system protein C (612 aa).

Residues 11–90 form the GIY-YIG domain; the sequence is TASGVYLMKG…IKKYRPRYNI (80 aa). A UVR domain is found at 200-235; that stretch reads SEVVESLQHQMAAAAERMAFEEAARLRDQLRAIEQT.

Belongs to the UvrC family. In terms of assembly, interacts with UvrB in an incision complex.

Its subcellular location is the cytoplasm. In terms of biological role, the UvrABC repair system catalyzes the recognition and processing of DNA lesions. UvrC both incises the 5' and 3' sides of the lesion. The N-terminal half is responsible for the 3' incision and the C-terminal half is responsible for the 5' incision. In Syntrophotalea carbinolica (strain DSM 2380 / NBRC 103641 / GraBd1) (Pelobacter carbinolicus), this protein is UvrABC system protein C.